A 778-amino-acid chain; its full sequence is MDFHSVLKMAAAKPGSDGIAKRYSLAVGPPKKDPKVKGVDSAAVQAFLRKKDEESRRKETVEKRKKEDLLAKRKELKHDRKARAMASRTKDNFKGYNGIPIEEKPRKRKRSGTEEDQNDNMAAEGEEYMTEEELYEYSQSESEQEEEEELPPQKVPKPAPGKKPPTPALNFNDLLRLAERKQYEPVEVVRPVKKEERLRTAEELKELEFLERKAQKADRKDPKRNEQLVKVSKGSGDKYSSLKGTHSGNSKSSSTEQNGTIRKSSSDTGSRTEKSGSVFHTKESKKPSSAKDLGGKGSRPNVTGDGKDRHSSSQPSAASNSAFGRPSGSARPSGSSGPGRPLGGSGSSSGKSTGGSASGSARSVGGSGSGSGKPMGGSGSGKPIGGLHSSHGSGKPTGGTGSGSGKPTGASGSGSGKPTGSSGSAKSVRESGSGSRSVRESGSGSRSVRESGSGSGSARSVRESGSGSGSARSVRESGSGSGSARSVRESGSAKQAGGPGSGRALGSGSSFARPSSNSSPAPGKPAAGSGSARPSSSGTPRSSSMGHSTSNSSRQPSSSGAVRPSSGPPTGATPKGPSPRPGAGPTSVRPNSTSVPGSARSSLGSGPGRPVAASATGQLAPAKPKCTVVAETISSKNFVPKSINGHMNGIRTAAPPGHRPAMRPPGPPLPPITSSYKRRIDDDDDYDSEMDDFIDDGGECQDEISKHIREIFGYDRTKYRDESDYALRYMESTFREQQKEEARSLRLGIQEDLEELQREEEELKRKAKQLKAAKKMSR.

3 disordered regions span residues 1–21 (MDFH…GIAK), 50–625 (KKDE…AKPK), and 639–685 (VPKS…DDDD). The segment at 1–665 (MDFHSVLKMA…PGHRPAMRPP (665 aa)) is important for interaction with DNA. Residues 44–83 (VQAFLRKKDEESRRKETVEKRKKEDLLAKRKELKHDRKAR) are a coiled coil. Positions 50–78 (KKDEESRRKETVEKRKKEDLLAKRKELKH) are enriched in basic and acidic residues. Acidic residues predominate over residues 114–135 (EEDQNDNMAAEGEEYMTEEELY). A compositionally biased stretch (pro residues) spans 153 to 167 (QKVPKPAPGKKPPTP). Over residues 190–227 (RPVKKEERLRTAEELKELEFLERKAQKADRKDPKRNEQ) the composition is skewed to basic and acidic residues. The stretch at 193 to 221 (KKEERLRTAEELKELEFLERKAQKADRKD) forms a coiled coil. Residues 242–269 (LKGTHSGNSKSSSTEQNGTIRKSSSDTG) show a composition bias toward polar residues. The span at 270–286 (SRTEKSGSVFHTKESKK) shows a compositional bias: basic and acidic residues. The span at 312–335 (SSQPSAASNSAFGRPSGSARPSGS) shows a compositional bias: low complexity. 2 stretches are compositionally biased toward gly residues: residues 336 to 357 (SGPG…GGSA) and 365 to 384 (GGSG…GKPI). The segment covering 385-394 (GGLHSSHGSG) has biased composition (low complexity). Gly residues predominate over residues 395 to 417 (KPTGGTGSGSGKPTGASGSGSGK). Composition is skewed to low complexity over residues 418 to 493 (PTGS…SGSA) and 506 to 559 (GSGS…PSSS). Residues 588-604 (VRPNSTSVPGSARSSLG) show a composition bias toward polar residues. Residues 662-671 (MRPPGPPLPP) show a composition bias toward pro residues. The interval 666–778 (GPPLPPITSS…QLKAAKKMSR (113 aa)) is important for interaction with histones. The stretch at 735–778 (REQQKEEARSLRLGIQEDLEELQREEEELKRKAKQLKAAKKMSR) forms a coiled coil.

This sequence belongs to the SPT2 family. In terms of assembly, interacts with histones. Interacts with a heterotetrameric complex formed by histone H3 and H4, especially when the histone tetramer is not bound to DNA.

It is found in the nucleus. The protein localises to the nucleolus. Its function is as follows. Histone chaperone that stabilizes pre-existing histone tetramers and regulates replication-independent histone exchange on chromatin. Required for normal chromatin refolding in the coding region of transcribed genes, and for the suppression of spurious transcription. Binds DNA and histones and promotes nucleosome assembly (in vitro). Facilitates formation of tetrameric histone complexes containing histone H3 and H4. Modulates RNA polymerase 1-mediated transcription. Binds DNA, with a preference for branched DNA species, such as Y-form DNA and Holliday junction DNA. In Xenopus tropicalis (Western clawed frog), this protein is Protein SPT2 homolog (spty2d1).